Here is a 328-residue protein sequence, read N- to C-terminus: L-lactate dehydrogenase (328 aa).

Residues V18, E39, K46, Y71, and 85–86 each bind NAD(+); that span reads GA. Positions 88 and 94 each coordinate substrate. NAD(+) contacts are provided by residues S107, 124–126, and S149; that span reads AAN. 126 to 129 contacts substrate; it reads NPVD. 154–157 contributes to the substrate binding site; sequence DSAR. Beta-D-fructose 1,6-bisphosphate-binding residues include R159 and H174. H181 (proton acceptor) is an active-site residue. Phosphotyrosine is present on Y226. Substrate is bound at residue T235.

Belongs to the LDH/MDH superfamily. LDH family. Homotetramer.

The protein resides in the cytoplasm. The catalysed reaction is (S)-lactate + NAD(+) = pyruvate + NADH + H(+). It participates in fermentation; pyruvate fermentation to lactate; (S)-lactate from pyruvate: step 1/1. Allosterically activated by fructose 1,6-bisphosphate (FBP). Catalyzes the conversion of lactate to pyruvate. In Streptococcus pneumoniae (strain 70585), this protein is L-lactate dehydrogenase.